The sequence spans 202 residues: Dephospho-CoA kinase (202 aa).

The 200-residue stretch at 3-202 (TIGITGGIGS…TKRPNPPDRL (200 aa)) folds into the DPCK domain. 11–16 (GSGKSV) serves as a coordination point for ATP. Residues 138-161 (RAMARDGSSAETMRQRMLSQEREQ) are disordered.

The protein belongs to the CoaE family.

The protein resides in the cytoplasm. The enzyme catalyses 3'-dephospho-CoA + ATP = ADP + CoA + H(+). Its pathway is cofactor biosynthesis; coenzyme A biosynthesis; CoA from (R)-pantothenate: step 5/5. Catalyzes the phosphorylation of the 3'-hydroxyl group of dephosphocoenzyme A to form coenzyme A. The sequence is that of Dephospho-CoA kinase from Porphyromonas gingivalis (strain ATCC BAA-308 / W83).